An 84-amino-acid polypeptide reads, in one-letter code: UPF0457 protein BC_3525 (84 aa).

Belongs to the UPF0457 family.

The protein is UPF0457 protein BC_3525 of Bacillus cereus (strain ATCC 14579 / DSM 31 / CCUG 7414 / JCM 2152 / NBRC 15305 / NCIMB 9373 / NCTC 2599 / NRRL B-3711).